A 446-amino-acid chain; its full sequence is Na(+)-translocating NADH-quinone reductase subunit A (446 aa).

This sequence belongs to the NqrA family. Composed of six subunits; NqrA, NqrB, NqrC, NqrD, NqrE and NqrF.

The enzyme catalyses a ubiquinone + n Na(+)(in) + NADH + H(+) = a ubiquinol + n Na(+)(out) + NAD(+). Functionally, NQR complex catalyzes the reduction of ubiquinone-1 to ubiquinol by two successive reactions, coupled with the transport of Na(+) ions from the cytoplasm to the periplasm. NqrA to NqrE are probably involved in the second step, the conversion of ubisemiquinone to ubiquinol. The polypeptide is Na(+)-translocating NADH-quinone reductase subunit A (Vibrio parahaemolyticus serotype O3:K6 (strain RIMD 2210633)).